Consider the following 691-residue polypeptide: Elongation factor G (691 aa).

The tr-type G domain maps to 8–283 (KRVRNIGIAA…AVVAYLPAPD (276 aa)). GTP-binding positions include 17 to 24 (AHIDAGKT), 81 to 85 (DTPGH), and 135 to 138 (NKMD).

The protein belongs to the TRAFAC class translation factor GTPase superfamily. Classic translation factor GTPase family. EF-G/EF-2 subfamily.

The protein resides in the cytoplasm. Functionally, catalyzes the GTP-dependent ribosomal translocation step during translation elongation. During this step, the ribosome changes from the pre-translocational (PRE) to the post-translocational (POST) state as the newly formed A-site-bound peptidyl-tRNA and P-site-bound deacylated tRNA move to the P and E sites, respectively. Catalyzes the coordinated movement of the two tRNA molecules, the mRNA and conformational changes in the ribosome. In Campylobacter lari (strain RM2100 / D67 / ATCC BAA-1060), this protein is Elongation factor G.